A 69-amino-acid chain; its full sequence is DNA gyrase inhibitor YacG (69 aa).

The Zn(2+) site is built by Cys9, Cys12, Cys28, and Cys32. A disordered region spans residues 48–69 (PVSPDAEDELFSGDLEAPHRGH).

This sequence belongs to the DNA gyrase inhibitor YacG family. Interacts with GyrB. Requires Zn(2+) as cofactor.

Inhibits all the catalytic activities of DNA gyrase by preventing its interaction with DNA. Acts by binding directly to the C-terminal domain of GyrB, which probably disrupts DNA binding by the gyrase. This is DNA gyrase inhibitor YacG from Pseudomonas syringae pv. syringae (strain B728a).